A 1995-amino-acid chain; its full sequence is Myosin-14 (1995 aa).

Residues 1–46 (MAAVTMSVPGRKAPPRPGPVPEAAQPFLFTPRGPSAGGGPGSGTSP) are disordered. The residue at position 2 (alanine 2) is an N-acetylalanine. The region spanning 51–101 (TARRLVWVPSELHGFEAAALRDEGEEEAEVELAESGRRLRLPRDQIQRMNP) is the Myosin N-terminal SH3-like domain. Serine 60 carries the phosphoserine modification. In terms of domain architecture, Myosin motor spans 105–800 (SKAEDMAELT…VLAQLEEERD (696 aa)). 198 to 205 (GESGAGKT) contributes to the ATP binding site. Residues 678 to 700 (LSRLMATLSNTNPSFVRCIVPNH) are actin-binding. Residues 803–832 (VTDIIVSFQAAARGYLARRAFQKRQQQQSA) enclose the IQ domain. Residues 862–1947 (LQVTRQDEVL…VTTLRNRLRR (1086 aa)) adopt a coiled-coil conformation. Threonine 1194 is modified (phosphothreonine). 4 disordered regions span residues 1371–1415 (EEAA…RRAA), 1592–1623 (QHER…VERD), 1905–1942 (EAEE…TTLR), and 1958–1995 (RQVF…AHPQ). The segment covering 1930–1942 (SAESMNREVTTLR) has biased composition (polar residues). 4 positions are modified to phosphoserine: serine 1969, serine 1980, serine 1983, and serine 1989. The segment covering 1981 to 1995 (GPSPEPEGSPPAHPQ) has biased composition (pro residues).

It belongs to the TRAFAC class myosin-kinesin ATPase superfamily. Myosin family. Myosin is a hexameric protein that consists of 2 heavy chain subunits (MHC), 2 alkali light chain subunits (MLC) and 2 regulatory light chain subunits (MLC-2). As to expression, high levels of expression are found in brain (highest in corpus callosum), heart, kidney, liver, lung, small intestine, colon and skeletal muscle. Expression is low in organs composed mainly of smooth muscle, such as aorta, uterus and urinary bladder. No detectable expression is found in thymus, spleen, placenta and lymphocytes.

Its function is as follows. Cellular myosin that appears to play a role in cytokinesis, cell shape, and specialized functions such as secretion and capping. In Homo sapiens (Human), this protein is Myosin-14 (MYH14).